Reading from the N-terminus, the 972-residue chain is UPF0746 protein DDB_G0280785 (972 aa).

Residues 1–19 (MISNKRKEIENINRHHEKD) show a composition bias toward basic and acidic residues. The tract at residues 1–30 (MISNKRKEIENINRHHEKDNDDDDSDGIDN) is disordered. The SAP domain maps to 44-78 (SGSTNYRELQIIAKSLGLASNGKKQLVYNRIEGYF).

Belongs to the UPF0746 family.

The sequence is that of UPF0746 protein DDB_G0280785 from Dictyostelium discoideum (Social amoeba).